The following is a 498-amino-acid chain: ADP,ATP carrier protein 1 (498 aa).

The Cytoplasmic segment spans residues 1–33 (MNNPKNDNYLSELSKVIWPIERYENKKFLPMAF). A helical transmembrane segment spans residues 34-54 (MMFCILLNYSTLRSIKDGFVV). Cysteines 37 and 85 form a disulfide. Residues 55–67 (TDIGAEAISFLKT) are Extracellular-facing. A helical membrane pass occupies residues 68–88 (YIVLPSAVIAMVIYVKLCDIL). Topologically, residues 89–92 (KQEN) are cytoplasmic. Residues 93–113 (VFYVITSFFLGYFALFAFVLY) traverse the membrane as a helical segment. The Extracellular portion of the chain corresponds to 114-147 (PYPDLVHPDPETIESWSVAYPNVKWFIRIVGKWS). Residues 148–168 (FASFYTMAELWGTMMLSLLFW) form a helical membrane-spanning segment. Residues 169 to 184 (QFANQITKTDEAKRFY) are Cytoplasmic-facing. Residues 185–205 (SMFGLLANLALPVTSVIIGYC) form a helical membrane-spanning segment. The Extracellular segment spans residues 206–218 (LHEKTQIVAEHLK). The chain crosses the membrane as a helical span at residues 219–239 (FVPLFVIMITSSFLVILTYRW). At 240–279 (MNKNVLTDPRLYDPALVKEKKAKAKMSLIDSFKMIFTSKY) the chain is on the cytoplasmic side. The helical transmembrane segment at 280-300 (VGYIALLLIAYGVSVNLVEGV) threads the bilayer. Residues 301 to 320 (WKSKVKELYPTKEAYTIYMG) lie on the Extracellular side of the membrane. Residues 321 to 341 (KFQFYQGWVAIAFMLIGSNIL) traverse the membrane as a helical segment. Residues 342-348 (RKVSWLT) are Cytoplasmic-facing. A helical transmembrane segment spans residues 349-369 (AAMITPLMMLITGAAFFAFIF). Residues 370-379 (FDSVIAMHLT) are Extracellular-facing. Residues 380–400 (GILASGPLALAVMIGMIQNVL) traverse the membrane as a helical segment. Residues 401-438 (SKGVKYSLFDATKNMAYIPLDKDLRVKGQAAVEVIGGR) are Cytoplasmic-facing. ATP is bound at residue 436 to 442 (GGRFGKS). A helical transmembrane segment spans residues 439–459 (FGKSGGAIIQSTFFILFPAFG). Topologically, residues 460 to 465 (FVEATP) are extracellular. A helical transmembrane segment spans residues 466–486 (YFASIFFVIVILWIYAVKGLN). Over 487-498 (KEYKVLVNKTEK) the chain is Cytoplasmic.

The protein belongs to the ADP/ATP translocase tlc family.

The protein resides in the cell membrane. Functionally, provides the rickettsial cell with host ATP in exchange for rickettsial ADP. This is an obligate exchange system. This energy acquiring activity is an important component of rickettsial parasitism. This chain is ADP,ATP carrier protein 1 (tlcA), found in Rickettsia conorii (strain ATCC VR-613 / Malish 7).